We begin with the raw amino-acid sequence, 236 residues long: 2-C-methyl-D-erythritol 4-phosphate cytidylyltransferase (236 aa).

It belongs to the IspD/TarI cytidylyltransferase family. IspD subfamily. As to quaternary structure, homodimer.

It carries out the reaction 2-C-methyl-D-erythritol 4-phosphate + CTP + H(+) = 4-CDP-2-C-methyl-D-erythritol + diphosphate. It participates in isoprenoid biosynthesis; isopentenyl diphosphate biosynthesis via DXP pathway; isopentenyl diphosphate from 1-deoxy-D-xylulose 5-phosphate: step 2/6. In terms of biological role, catalyzes the formation of 4-diphosphocytidyl-2-C-methyl-D-erythritol from CTP and 2-C-methyl-D-erythritol 4-phosphate (MEP). The polypeptide is 2-C-methyl-D-erythritol 4-phosphate cytidylyltransferase (Cronobacter sakazakii (strain ATCC BAA-894) (Enterobacter sakazakii)).